The primary structure comprises 1711 residues: Hybrid PKS-NRPS synthetase TAS1 (1711 aa).

The segment at 43-397 is condensation (C) domain; the sequence is APLSKMQRAL…RNGLNSEHRV (355 aa). The adenylation (A) domain stretch occupies residues 506–907; the sequence is QQQATLRPEQ…TVLLYGRINN (402 aa). The region spanning 1043 to 1119 is the Carrier 1 domain; it reads LEWAAAKARI…SQVGLVQSRR (77 aa). An O-(pantetheine 4'-phosphoryl)serine modification is found at S1079. Positions 1114-1127 are enriched in polar residues; it reads LVQSRRGSSGSPRT. The disordered stretch occupies residues 1114-1159; that stretch reads LVQSRRGSSGSPRTVRSHARPQRKAKTPPRQARPETPESDYDQLPD. Residues 1128–1140 are compositionally biased toward basic residues; that stretch reads VRSHARPQRKAKT. A Carrier 2 domain is found at 1159–1236; it reads DLRDDVQQSI…AQVELLGRFT (78 aa). S1195 carries the post-translational modification O-(pantetheine 4'-phosphoryl)serine. The 418-residue stretch at 1266-1683 folds into the Ketosynthase family 3 (KS3) domain; sequence REQYAIVGMS…GSTAHVVLSA (418 aa). Residues C1429, H1565, and N1608 each act as for beta-ketoacyl synthase activity in the active site.

It in the N-terminal section; belongs to the NRP synthetase family. Requires pantetheine 4'-phosphate as cofactor.

It catalyses the reaction acetoacetyl-CoA + L-isoleucine + ATP = tenuazonic acid + AMP + diphosphate + CoA + 2 H(+). Functionally, hybrid PKS-NRPS synthetase that mediates the biosynthesis of the toxin tenuazonic acid (TeA), an inhibitor of protein biosynthesis on ribosomes by suppressing the release of new protein. TAS1 alone is sufficient for TeA synthesis via the condensation of isoleucine (Ile) with acetoacetyl-CoA by the N-terminal NRPS module and subsequent cyclization conducted by the C-terminal KS domain. In Botryobasidium botryosum (strain FD-172 SS1), this protein is Hybrid PKS-NRPS synthetase TAS1.